Here is a 518-residue protein sequence, read N- to C-terminus: Probable G-protein coupled receptor Mth-like 2 (518 aa).

The signal sequence occupies residues 1-26 (MIASSKMLLSASILIYFLLNLQSSSA). Residues 27 to 220 (EIADCSFYDT…CLILPSRTGQ (194 aa)) lie on the Extracellular side of the membrane. 5 cysteine pairs are disulfide-bonded: Cys31-Cys85, Cys87-Cys92, Cys96-Cys190, Cys97-Cys108, and Cys152-Cys211. N-linked (GlcNAc...) asparagine glycosylation is present at Asn47. N-linked (GlcNAc...) asparagine glycosylation is found at Asn111, Asn125, and Asn201. The chain crosses the membrane as a helical span at residues 221-241 (TVVMITSLICLVLTIAVYLCV). At 242–250 (KKLMNLEGK) the chain is on the cytoplasmic side. The helical transmembrane segment at 251–271 (CFICYMMCLFFGYLFLLLDLW) threads the bilayer. The Extracellular segment spans residues 272-279 (ELSLDFCK). Residues 280 to 300 (AAGFLGYFFVMAAFFWLSIIS) traverse the membrane as a helical segment. Residues 301 to 321 (RHYWKCLTNPCASMNIRSERA) are Cytoplasmic-facing. The helical transmembrane segment at 322–342 (FLLYSCFAWAMPLALTGVTYL) threads the bilayer. At 343 to 371 (ADNVVNNEEWQPRVGDEGHCWIYTKSWSA) the chain is on the extracellular side. Residues 372 to 392 (MVYFYGPMVLLILFNITMFVL) traverse the membrane as a helical segment. Residues 393 to 426 (TAKHIIDSKRTLRKIARNEGRIQKLNSDKQNYTQ) lie on the Cytoplasmic side of the membrane. Residues 427–447 (FLLLFTVMGMSWSFEIFSYLV) traverse the membrane as a helical segment. Residues 448 to 455 (QREKLWVN) lie on the Extracellular side of the membrane. Residues 456–476 (IFLVADYFNWSQGVIIFVLFI) form a helical membrane-spanning segment. At 477 to 518 (LRRKTLVLFKKQIFPKQRAFSRSATQSTIESISQTKRHFNMT) the chain is on the cytoplasmic side.

The protein belongs to the G-protein coupled receptor 2 family. Mth subfamily.

Its subcellular location is the cell membrane. The chain is Probable G-protein coupled receptor Mth-like 2 (mthl2) from Drosophila melanogaster (Fruit fly).